The primary structure comprises 564 residues: 4-hydroxybutyrate--CoA ligase 1 (564 aa).

Residues 105–125 (VHPMHWAVFLAVIKGGFVMVP) traverse the membrane as a helical segment. Residues 204-212 (TSGTTGMPK), 343-348 (DFYGQT), aspartate 429, and arginine 444 contribute to the ATP site. Threonine 348 is a binding site for substrate. Position 452–454 (452–454 (SDY)) interacts with CoA. A substrate-binding site is contributed by arginine 455. CoA contacts are provided by residues arginine 484, lysine 513, and 521–523 (VPR). Lysine 538 is an ATP binding site.

It belongs to the ATP-dependent AMP-binding enzyme family. Mg(2+) serves as cofactor. It depends on Mn(2+) as a cofactor.

It is found in the membrane. The catalysed reaction is 4-hydroxybutanoate + ATP + CoA = 4-hydroxybutanoyl-CoA + AMP + diphosphate. The enzyme catalyses acetate + ATP + CoA = acetyl-CoA + AMP + diphosphate. It carries out the reaction propanoate + ATP + CoA = propanoyl-CoA + AMP + diphosphate. It catalyses the reaction a medium-chain fatty acid + ATP + CoA = a medium-chain fatty acyl-CoA + AMP + diphosphate. Its function is as follows. Involved in the 3-hydroxypropionate/4-hydroxybutyrate cycle which incorporates carbon dioxide into cellular carbon. Catalyzes the ligation of coenzyme A (CoA) to 4-hydroxybutyrate (4HB). It can also use butyrate, valerate, propionate, acetate and 3-hydroxybutyrate (3HB) as substrates. This Metallosphaera sedula (strain ATCC 51363 / DSM 5348 / JCM 9185 / NBRC 15509 / TH2) protein is 4-hydroxybutyrate--CoA ligase 1.